Consider the following 310-residue polypeptide: GPN-loop GTPase 2 (310 aa).

An N-acetylalanine modification is found at Ala-2. 19 to 24 (GSGKTT) contributes to the GTP binding site. A Gly-Pro-Asn (GPN)-loop; involved in dimer interface motif is present at residues 76 to 78 (GPN). 178 to 181 (SKMD) contributes to the GTP binding site.

It belongs to the GPN-loop GTPase family. In terms of assembly, heterodimers with GPN1 or GPN3. Binds to RNA polymerase II (RNAPII).

In terms of biological role, small GTPase required for proper localization of RNA polymerase II and III (RNAPII and RNAPIII). May act at an RNAP assembly step prior to nuclear import. The sequence is that of GPN-loop GTPase 2 from Homo sapiens (Human).